Consider the following 622-residue polypeptide: Chaperone protein HscA homolog (622 aa).

This sequence belongs to the heat shock protein 70 family.

Chaperone involved in the maturation of iron-sulfur cluster-containing proteins. Has a low intrinsic ATPase activity which is markedly stimulated by HscB. This Pseudoalteromonas atlantica (strain T6c / ATCC BAA-1087) protein is Chaperone protein HscA homolog.